A 1558-amino-acid chain; its full sequence is Calmodulin-regulated spectrin-associated protein 1-B (1558 aa).

A Calponin-homology (CH) domain is found at 231–346 (WYWKLVPVRY…FIAELFWWFE (116 aa)). Composition is skewed to polar residues over residues 400–417 (VQNS…SGFS), 440–450 (ACRNRSNSLTQ), and 504–516 (ASTV…SHPG). Disordered regions lie at residues 400-464 (VQNS…SDKR), 504-523 (ASTV…VRRI), 551-585 (NDIT…SDSR), 602-675 (AKEK…APGQ), 737-790 (TKEL…VASG), 803-850 (QRFG…QNKD), and 943-968 (DRSK…SSSP). Over residues 602–620 (AKEKSISLNKEEESGEGRQ) the composition is skewed to basic and acidic residues. Residues 643-658 (QTLNRTFTPNTSSEFE) are compositionally biased toward polar residues. Residues 737-772 (TKELHPDKKQHFEEEVESAKLREDMNVKEHEDKDGG) show a composition bias toward basic and acidic residues. 2 stretches are compositionally biased toward low complexity: residues 776 to 790 (SSPG…VASG) and 812 to 822 (RSSTSSSQRTT). A coiled-coil region spans residues 849–887 (KDNANMLASELVQLHMQLEEKRRAIESQKKKMEILTARQ). Over residues 943 to 955 (DRSKEAEEPEKAS) the composition is skewed to basic and acidic residues. The stretch at 971–1004 (VEEEVDLNECNRSIELLNEAIGSIQQQMMQLSLQ) forms a coiled coil. Disordered stretches follow at residues 1041 to 1131 (FVEP…TFHL), 1257 to 1293 (LRKQ…RREL), 1305 to 1344 (ELCE…KCPA), and 1360 to 1414 (LASV…ITST). Residues 1080–1090 (SSTPTPTDSPS) are compositionally biased toward low complexity. Over residues 1106 to 1115 (DFVQSSVRSE) the composition is skewed to polar residues. A coiled-coil region spans residues 1243–1303 (AFLLKQQRKA…IKQEYLRKKQ (61 aa)). Basic residues predominate over residues 1317–1328 (PKTKPKKQRLKS). The region spanning 1421–1555 (GPKLFKEPSA…QAKRPAGPKK (135 aa)) is the CKK domain.

The protein belongs to the CAMSAP1 family.

It is found in the cytoplasm. The protein localises to the cytoskeleton. Functionally, key microtubule-organizing protein that specifically binds the minus-end of non-centrosomal microtubules and regulates their dynamics and organization. Specifically recognizes growing microtubule minus-ends and stabilizes microtubules. Acts on free microtubule minus-ends that are not capped by microtubule-nucleating proteins or other factors and protects microtubule minus-ends from depolymerization. In contrast to camsap2 and camsap3, tracks along the growing tips of minus-end microtubules without significantly affecting the polymerization rate: binds at the very tip of the microtubules minus-end and acts as a minus-end tracking protein (-TIP) that dissociates from microtubules after allowing tubulin incorporation. Through interaction with spectrin may regulate neurite outgrowth. This Danio rerio (Zebrafish) protein is Calmodulin-regulated spectrin-associated protein 1-B (camsap1b).